Here is a 121-residue protein sequence, read N- to C-terminus: Large ribosomal subunit protein uL14 (121 aa).

Belongs to the universal ribosomal protein uL14 family. Part of the 50S ribosomal subunit. Forms a cluster with proteins L3 and L19. In the 70S ribosome, L14 and L19 interact and together make contacts with the 16S rRNA in bridges B5 and B8.

Its function is as follows. Binds to 23S rRNA. Forms part of two intersubunit bridges in the 70S ribosome. This is Large ribosomal subunit protein uL14 from Synechococcus sp. (strain CC9605).